The sequence spans 150 residues: Natriuretic peptides A (150 aa).

A signal peptide spans 1–24; the sequence is MSSFTITVSFLLVLVFQFPGQTRA. 2 consecutive propeptides follow at residues 25–122 and 92–102; these read NPVY…AAPR and DGGALGRGPWD. The tract at residues 77 to 100 is disordered; that stretch reads LEVPPWTGEVNPAQRDGGALGRGP. Ser128 is modified (phosphoserine). Cys129 and Cys145 are disulfide-bonded.

This sequence belongs to the natriuretic peptide family. Homodimer; disulfide-linked antiparallel dimer. The precursor molecule is proteolytically cleaved by CORIN at Arg-122 to produce the atrial natriuretic peptide. Undergoes further proteolytic cleavage by unknown proteases to give rise to long-acting natriuretic peptide, vessel dilator and kaliuretic peptide. Additional processing gives rise to the auriculin and atriopeptin peptides. In the kidneys, alternative processing by an unknown protease results in the peptide urodilatin. Post-translationally, cleavage by MME initiates degradation of the factor and thereby regulates its activity. Degradation by IDE results in reduced activation of NPR1 (in vitro). During IDE degradation, the resulting products can temporarily stimulate NPR2 to produce cGMP, before the fragments are completely degraded and inactivated by IDE (in vitro). In terms of processing, degraded by IDE. Phosphorylation on Ser-128 decreases vasorelaxant activity. As to expression, brain (at protein level).

The protein localises to the secreted. The protein resides in the perikaryon. Its subcellular location is the cell projection. Hormone that plays a key role in mediating cardio-renal homeostasis, and is involved in vascular remodeling and regulating energy metabolism. Acts by specifically binding and stimulating NPR1 to produce cGMP, which in turn activates effector proteins, such as PRKG1, that drive various biological responses. Regulates vasodilation, natriuresis, diuresis and aldosterone synthesis and is therefore essential for regulating blood pressure, controlling the extracellular fluid volume and maintaining the fluid-electrolyte balance. Also involved in inhibiting cardiac remodeling and cardiac hypertrophy by inducing cardiomyocyte apoptosis and attenuating the growth of cardiomyocytes and fibroblasts. Plays a role in female pregnancy by promoting trophoblast invasion and spiral artery remodeling in uterus, and thus prevents pregnancy-induced hypertension. In adipose tissue, acts in various cGMP- and PKG-dependent pathways to regulate lipid metabolism and energy homeostasis. This includes up-regulating lipid metabolism and mitochondrial oxygen utilization by activating the AMP-activated protein kinase (AMPK), and increasing energy expenditure by acting via MAPK11 to promote the UCP1-dependent thermogenesis of brown adipose tissue. Binds the clearance receptor NPR3 which removes the hormone from circulation. Functionally, may have a role in cardio-renal homeostasis through regulation of natriuresis, diuresis, vasodilation, and inhibiting aldosterone synthesis. In vitro, promotes the production of cGMP and induces vasodilation. May promote natriuresis, at least in part, by enhancing prostaglandin E2 synthesis resulting in the inhibition of renal Na+-K+-ATPase. However reports on the involvement of this peptide in mammal blood volume and blood pressure homeostasis are conflicting; according to a report, in vivo it is not sufficient to activate cGMP and does not inhibit collecting duct transport nor effect diuresis and natriuresis. Appears to bind to specific receptors that are distinct from the receptors bound by atrial natriuretic peptide and vessel dilator. Possibly enhances protein excretion in urine by decreasing proximal tubular protein reabsorption. Its function is as follows. May have a role in cardio-renal homeostasis through regulation of natriuresis, diuresis, and vasodilation. In vitro, promotes the production of cGMP and induces vasodilation. May promote natriuresis, at least in part, by enhancing prostaglandin E2 synthesis resulting in the inhibition of renal Na+-K+-ATPase. However reports on the involvement of this peptide in mammal blood volume and blood pressure homeostasis are conflicting; according to a report it is not sufficient to activate cGMP and does not inhibit collecting duct transport nor effect diuresis and natriuresis. Appears to bind to specific receptors that are distinct from the receptors bound by the atrial natriuretic and long-acting natriuretic peptides. Possibly functions in protein excretion in urine by maintaining the integrity of the proximal tubules and enhancing protein excretion by decreasing proximal tubular protein reabsorption. In terms of biological role, may have a role in cardio-renal homeostasis through regulation of diuresis and inhibiting aldosterone synthesis. In vitro, promotes the production of cGMP and induces vasodilation. May promote natriuresis, at least in part, by enhancing prostaglandin E2 synthesis resulting in the inhibition of renal Na+-K+-ATPase. May have a role in potassium excretion but not sodium excretion (natriuresis). Possibly enhances protein excretion in urine by decreasing proximal tubular protein reabsorption. Hormone produced in the kidneys that appears to be important for maintaining cardio-renal homeostasis. Mediates vasodilation, natriuresis and diuresis primarily in the renal system, in order to maintain the extracellular fluid volume and control the fluid-electrolyte balance. Specifically binds and stimulates cGMP production by renal transmembrane receptors, likely NPR1. Urodilatin not ANP, may be the natriuretic peptide responsible for the regulation of sodium and water homeostasis in the kidney. Functionally, may have a role in cardio-renal homeostasis through regulation of natriuresis and vasodilation. In vivo promotes natriuresis and in vitro, vasodilates renal artery strips. Its function is as follows. May have a role in cardio-renal homeostasis through regulation of regulation of natriuresis and vasodilation. In vivo promotes natriuresis. In vitro, vasodilates intestinal smooth muscle but not smooth muscle strips. In terms of biological role, may have a role in cardio-renal homeostasis through regulation of natriuresis and vasodilation. In vivo promotes natriuresis. In vitro, selectively vasodilates intestinal and vascular smooth muscle strips. May have a role in cardio-renal homeostasis through regulation of natriuresis and vasodilation. In vivo promotes natriuresis. In vitro, selectively vasodilates intestinal smooth muscle but not vascular smooth muscle strips. This is Natriuretic peptides A (NPPA) from Sus scrofa (Pig).